A 491-amino-acid polypeptide reads, in one-letter code: Protein phosphatase ppm-1.G (491 aa).

The PPM-type phosphatase domain maps to 23 to 486 (SYACTTMQGW…DNMTVICTTF (464 aa)). Mn(2+) contacts are provided by aspartate 57 and glycine 58. Positions 112 to 125 (KDIGDEGKPKKAGG) are enriched in basic and acidic residues. 2 disordered regions span residues 112 to 136 (KDIG…ADRI) and 170 to 294 (GDVS…EEMV). Composition is skewed to acidic residues over residues 173–192 (SDDS…QDDT) and 260–294 (ATEE…EEMV). Mn(2+) contacts are provided by aspartate 428 and aspartate 477.

It belongs to the PP2C family. Mg(2+) is required as a cofactor. The cofactor is Mn(2+).

It catalyses the reaction O-phospho-L-seryl-[protein] + H2O = L-seryl-[protein] + phosphate. It carries out the reaction O-phospho-L-threonyl-[protein] + H2O = L-threonyl-[protein] + phosphate. In Caenorhabditis elegans, this protein is Protein phosphatase ppm-1.G.